The chain runs to 220 residues: MRPLIVASLPIKKIEDLKLIENFLDADLIELRLDYLREREVSLISDYYEFLDKYKKKLIVTLRDKGEGGINQLADELKIKILNELYERQYLYDIEVSFLQKYDIPYDNRIVSVHYFNYLPTLEKIKEIVSKFSEKAFSVKIAVPSLKGYKEVLLPLLEYENVTVIPMSNNSLERIAVGLLGSKLVYSYAIEPLAQGQLYYKKVIQIFNYINDITTSSLVT.

3-dehydroquinate-binding positions include serine 8, 30–32 (ELR), and arginine 63. Histidine 114 functions as the Proton donor/acceptor in the catalytic mechanism. Lysine 140 (schiff-base intermediate with substrate) is an active-site residue. Positions 174 and 197 each coordinate 3-dehydroquinate.

This sequence belongs to the type-I 3-dehydroquinase family. Homodimer.

The catalysed reaction is 3-dehydroquinate = 3-dehydroshikimate + H2O. Its pathway is metabolic intermediate biosynthesis; chorismate biosynthesis; chorismate from D-erythrose 4-phosphate and phosphoenolpyruvate: step 3/7. Its function is as follows. Involved in the third step of the chorismate pathway, which leads to the biosynthesis of aromatic amino acids. Catalyzes the cis-dehydration of 3-dehydroquinate (DHQ) and introduces the first double bond of the aromatic ring to yield 3-dehydroshikimate. This Saccharolobus solfataricus (strain ATCC 35092 / DSM 1617 / JCM 11322 / P2) (Sulfolobus solfataricus) protein is 3-dehydroquinate dehydratase.